A 692-amino-acid chain; its full sequence is Enzymatic polyprotein (692 aa).

The active-site For protease activity is the D36. The region spanning 227–411 is the Reverse transcriptase domain; it reads LKKGLIRESQ…QEIEYLGLKI (185 aa).

The protein belongs to the caulimoviridae enzymatic polyprotein family.

It carries out the reaction DNA(n) + a 2'-deoxyribonucleoside 5'-triphosphate = DNA(n+1) + diphosphate. Encodes for at least two polypeptides: protease (PR) and reverse transcriptase (RT). The protease processes the polyprotein in cis. Reverse transcriptase is multifunctional enzyme that converts the viral RNA genome into dsDNA in viral cytoplasmic capsids. This enzyme displays a DNA polymerase activity that can copy either DNA or RNA templates, and a ribonuclease H (RNase H) activity that cleaves the RNA strand of RNA-DNA heteroduplexes in a partially processive 3'- to 5'-endonucleasic mode. Neo-synthesized pregenomic RNA (pgRNA) are encapsidated, and reverse-transcribed inside the nucleocapsid. Partial (+)DNA is synthesized from the (-)DNA template and generates the relaxed circular DNA (RC-DNA) genome. After budding and infection, the RC-DNA migrates in the nucleus, and is converted into a plasmid-like covalently closed circular DNA (cccDNA). The sequence is that of Enzymatic polyprotein from Soybean chlorotic mottle virus.